Here is a 1894-residue protein sequence, read N- to C-terminus: Fibronectin type III domain-containing protein 1 (1894 aa).

The N-terminal stretch at 1-32 (MAPEAGATLRAPRRLSWAALLLLAALLPVASS) is a signal peptide. Residues 39–131 (HPLKPRHVKL…PVYRAESPPG (93 aa)) enclose the Fibronectin type-III 1 domain. Residue asparagine 149 is glycosylated (N-linked (GlcNAc...) asparagine). Fibronectin type-III domains are found at residues 158-258 (PNKP…SEED), 262-357 (VPDD…TPES), and 362-457 (APEN…MPTT). 4 disordered regions span residues 455-500 (PTTS…PQGR), 515-1271 (ANGG…TVSP), 1311-1350 (LSRQ…IING), and 1444-1515 (THPP…CPPG). Basic residues predominate over residues 565–574 (TLRPPSRHGH). Residues 614-625 (PSASASPAHHAS) are compositionally biased toward low complexity. Positions 626 to 641 (TQGTSHRPSLPASLND) are enriched in polar residues. 2 stretches are compositionally biased toward low complexity: residues 711–722 (SASAPPSRLSPP) and 759–778 (SRST…TQVS). Position 717 is a phosphoserine (serine 717). Positions 786–799 (GESHGDGDREDGGR) are enriched in basic and acidic residues. Composition is skewed to polar residues over residues 941–957 (KYSS…QSTD) and 1027–1060 (SPSQ…TASS). A compositionally biased stretch (acidic residues) spans 1071–1088 (QDEDAQGSYDDDSTEVEA). Polar residues predominate over residues 1166–1176 (PLSSKSQQSVS). The segment covering 1197–1209 (SSSVPKWPSSSTP) has biased composition (low complexity). Positions 1211–1226 (GGKDADGSLAKEEREP) are enriched in basic and acidic residues. Residues 1445-1504 (HPPTTTMQPTTTTTPLPTTTTPRPTTATTRRTTTTRRTTTRRPTTTVRTTTRTTTTTTPT) are compositionally biased toward low complexity. One can recognise a Fibronectin type-III 5 domain in the interval 1658-1752 (APRNITVVAV…PSVSFVTESD (95 aa)). Asparagine 1661 carries N-linked (GlcNAc...) asparagine glycosylation.

Almost absent from healthy skin; especially in epidermal keratinocytes, skin fibroblasts or endothelial cells and is barely detectable in benign melanocytic naevi. Expressed in the stroma close to skin tumors, in the tumor cells themselves and in the epidermis of psoriasis.

It is found in the secreted. Functionally, may be an activator of G protein signaling. The polypeptide is Fibronectin type III domain-containing protein 1 (FNDC1) (Homo sapiens (Human)).